A 637-amino-acid polypeptide reads, in one-letter code: Early transcription factor 70 kDa subunit (637 aa).

Residues 32–185 (RTIIDENRSV…GHIIDLMSEE (154 aa)) enclose the Helicase ATP-binding domain. Residue 45–52 (HIMGSGKT) participates in ATP binding. The DEXH box motif lies at 135-138 (DEAH). A Helicase C-terminal domain is found at 327–507 (KFKYFINRIQ…VLPFDIKKLL (181 aa)).

It belongs to the helicase family. VETF subfamily. As to quaternary structure, heterodimer of a 70 kDa and a 82 kDa subunit. Part of the early transcription complex composed of ETF, RAP94/OPG109, and the DNA-directed RNA polymerase.

The protein localises to the virion. Acts with RNA polymerase to initiate transcription from early gene promoters. Is recruited by the RPO-associated protein of 94 kDa RAP94/OPG109 to form the early transcription complex, which also contains the core RNA polymerase. ETF heterodimer binds to early gene promoters. The protein is Early transcription factor 70 kDa subunit (OPG118) of Vaccinia virus (strain Ankara) (VACV).